The chain runs to 194 residues: Peptidyl-tRNA hydrolase (194 aa).

Tyr17 provides a ligand contact to tRNA. The active-site Proton acceptor is the His22. The tRNA site is built by Phe68, Asn70, and Asn116.

It belongs to the PTH family. As to quaternary structure, monomer.

The protein localises to the cytoplasm. The enzyme catalyses an N-acyl-L-alpha-aminoacyl-tRNA + H2O = an N-acyl-L-amino acid + a tRNA + H(+). Hydrolyzes ribosome-free peptidyl-tRNAs (with 1 or more amino acids incorporated), which drop off the ribosome during protein synthesis, or as a result of ribosome stalling. In terms of biological role, catalyzes the release of premature peptidyl moieties from peptidyl-tRNA molecules trapped in stalled 50S ribosomal subunits, and thus maintains levels of free tRNAs and 50S ribosomes. This is Peptidyl-tRNA hydrolase from Shewanella halifaxensis (strain HAW-EB4).